The chain runs to 396 residues: Elongation factor Tu (396 aa).

The 196-residue stretch at lysine 10–valine 205 folds into the tr-type G domain. Positions glycine 19–threonine 26 are G1. Glycine 19–threonine 26 serves as a coordination point for GTP. Position 26 (threonine 26) interacts with Mg(2+). Residues glycine 62 to asparagine 66 are G2. Residues aspartate 83–glycine 86 form a G3 region. Residues aspartate 83–histidine 87 and asparagine 138–aspartate 141 each bind GTP. Residues asparagine 138 to aspartate 141 form a G4 region. Positions serine 175–leucine 177 are G5.

It belongs to the TRAFAC class translation factor GTPase superfamily. Classic translation factor GTPase family. EF-Tu/EF-1A subfamily. As to quaternary structure, monomer.

The protein resides in the cytoplasm. It carries out the reaction GTP + H2O = GDP + phosphate + H(+). In terms of biological role, GTP hydrolase that promotes the GTP-dependent binding of aminoacyl-tRNA to the A-site of ribosomes during protein biosynthesis. The chain is Elongation factor Tu from Nocardia farcinica (strain IFM 10152).